Consider the following 372-residue polypeptide: Rab9 effector protein with kelch motifs (372 aa).

5 Kelch repeats span residues 49–95, 100–146, 151–203, 204–250, and 254–303; these read KVFI…FLPS, SIWV…TSSA, HLYV…AAGT, KLFI…AAVA, and HVYV…VIPW. The tract at residues 321-342 is disordered; sequence LQDEKGDAAEKPETRSGGSREE. A compositionally biased stretch (basic and acidic residues) spans 322-342; the sequence is QDEKGDAAEKPETRSGGSREE. A Kelch 6 repeat occupies 349-372; sequence LCFVFGGMNTEGEIYDDCLVTVVD.

As to quaternary structure, interacts with PIKFYVE; the interaction recruits RABEPK to the endosomal membrane. Interacts with RAB9 in its GTP-bound conformation. In terms of processing, phosphorylated on Ser residues by PIKFYVE.

The protein localises to the cytoplasm. It is found in the endosome membrane. Rab9 effector required for endosome to trans-Golgi network (TGN) transport. The polypeptide is Rab9 effector protein with kelch motifs (Rabepk) (Rattus norvegicus (Rat)).